A 233-amino-acid polypeptide reads, in one-letter code: Large ribosomal subunit protein uL1 (233 aa).

It belongs to the universal ribosomal protein uL1 family. As to quaternary structure, part of the 50S ribosomal subunit.

Its function is as follows. Binds directly to 23S rRNA. The L1 stalk is quite mobile in the ribosome, and is involved in E site tRNA release. Protein L1 is also a translational repressor protein, it controls the translation of the L11 operon by binding to its mRNA. In Thermotoga petrophila (strain ATCC BAA-488 / DSM 13995 / JCM 10881 / RKU-1), this protein is Large ribosomal subunit protein uL1.